Here is a 167-residue protein sequence, read N- to C-terminus: CGG triplet repeat-binding protein 1 (167 aa).

Serine 56 is modified (phosphoserine). The short motif at 80–84 (RKKQR) is the Nuclear localization signal element. Serine 164 carries the post-translational modification Phosphoserine.

Ubiquitous. Highly expressed in placenta, thymus, lymph nodes, cerebellum and cerebral cortex. Low expression in other regions of the brain.

It is found in the nucleus. Its function is as follows. Binds to nonmethylated 5'-d(CGG)(n)-3' trinucleotide repeats in the FMR1 promoter. May play a role in regulating FMR1 promoter. In Homo sapiens (Human), this protein is CGG triplet repeat-binding protein 1 (CGGBP1).